The sequence spans 273 residues: Dermonecrotic toxin LdSicTox-alphaIB3ai (273 aa).

The active site involves His-5. Positions 25 and 27 each coordinate Mg(2+). His-41 functions as the Nucleophile in the catalytic mechanism. 2 cysteine pairs are disulfide-bonded: Cys-45-Cys-51 and Cys-47-Cys-190. Asp-85 provides a ligand contact to Mg(2+).

The protein belongs to the arthropod phospholipase D family. Class II subfamily. Mg(2+) serves as cofactor. In terms of tissue distribution, expressed by the venom gland.

The protein resides in the secreted. The catalysed reaction is an N-(acyl)-sphingosylphosphocholine = an N-(acyl)-sphingosyl-1,3-cyclic phosphate + choline. The enzyme catalyses an N-(acyl)-sphingosylphosphoethanolamine = an N-(acyl)-sphingosyl-1,3-cyclic phosphate + ethanolamine. It catalyses the reaction a 1-acyl-sn-glycero-3-phosphocholine = a 1-acyl-sn-glycero-2,3-cyclic phosphate + choline. It carries out the reaction a 1-acyl-sn-glycero-3-phosphoethanolamine = a 1-acyl-sn-glycero-2,3-cyclic phosphate + ethanolamine. Functionally, dermonecrotic toxins cleave the phosphodiester linkage between the phosphate and headgroup of certain phospholipids (sphingolipid and lysolipid substrates), forming an alcohol (often choline) and a cyclic phosphate. This toxin acts on sphingomyelin (SM). It may also act on ceramide phosphoethanolamine (CPE), lysophosphatidylcholine (LPC) and lysophosphatidylethanolamine (LPE), but not on lysophosphatidylserine (LPS), and lysophosphatidylglycerol (LPG). It acts by transphosphatidylation, releasing exclusively cyclic phosphate products as second products. Induces dermonecrosis, hemolysis, increased vascular permeability, edema, inflammatory response, and platelet aggregation. The protein is Dermonecrotic toxin LdSicTox-alphaIB3ai of Loxosceles deserta (Desert recluse spider).